A 569-amino-acid chain; its full sequence is MRASQWFLVTQKETPNDAEIASHQLMLRSGMIRKLGSGLYTWMPLGLRVLRKVENIVREEMNKTHAMELLMPSVQPAELWQETGRWETFGGQLLTMKDSNQREYCFGPTHEEVITDIMRNELQSYKQLPVNFYQIQTKFRDEIRPRFGVMRAREFIMKDAYSFHLSIESLQETYKDMYQAYCRIFDRMGLKYRAVEADTGAIGGSASHEFQVLAESGEDLIFYSDASDYAANIEQATSLKPPKANQACNETITLVDTPNQKTIDEVASFLGIASNQTIKTLIVKGKEHPMVALVLRGDDELNEVKATKHPLVHSPLSFIDEELILKTLKTPLGSIGPIQLNIPVIVDHHALAMPSFVCGANQADKHFINAAWERDAKYDDAYDLRNVKEGDPSPDGRGMLHCCRGIEVGHVFQLGDKYAKAMNASVINEQGQLQTMIMGCYGLGITRVVAAAIEQHHDEHGIIWPQALAPFQVNIIPLNGARSQTVKEQAESLYQQLKSHGIDVLLDDRNERAGVLFADNDLIGIPHRLVVSERNLEQGCIEYKSRTSSETQLINLDKVVNFIIELINK.

It belongs to the class-II aminoacyl-tRNA synthetase family. ProS type 1 subfamily. In terms of assembly, homodimer.

The protein resides in the cytoplasm. It catalyses the reaction tRNA(Pro) + L-proline + ATP = L-prolyl-tRNA(Pro) + AMP + diphosphate. Functionally, catalyzes the attachment of proline to tRNA(Pro) in a two-step reaction: proline is first activated by ATP to form Pro-AMP and then transferred to the acceptor end of tRNA(Pro). As ProRS can inadvertently accommodate and process non-cognate amino acids such as alanine and cysteine, to avoid such errors it has two additional distinct editing activities against alanine. One activity is designated as 'pretransfer' editing and involves the tRNA(Pro)-independent hydrolysis of activated Ala-AMP. The other activity is designated 'posttransfer' editing and involves deacylation of mischarged Ala-tRNA(Pro). The misacylated Cys-tRNA(Pro) is not edited by ProRS. This chain is Proline--tRNA ligase, found in Legionella pneumophila (strain Corby).